A 353-amino-acid polypeptide reads, in one-letter code: Probable protein phosphatase 2C 48 (353 aa).

Positions Phe54–Phe348 constitute a PPM-type phosphatase domain. Mn(2+) contacts are provided by Asp90, Gly91, Asp293, and Asp339.

Belongs to the PP2C family. The cofactor is Mg(2+). It depends on Mn(2+) as a cofactor.

The catalysed reaction is O-phospho-L-seryl-[protein] + H2O = L-seryl-[protein] + phosphate. The enzyme catalyses O-phospho-L-threonyl-[protein] + H2O = L-threonyl-[protein] + phosphate. The protein is Probable protein phosphatase 2C 48 of Oryza sativa subsp. japonica (Rice).